Consider the following 241-residue polypeptide: Carboxy-S-adenosyl-L-methionine synthase (241 aa).

Residues Tyr-38, 63-65, 88-89, 116-117, Asn-131, and Arg-198 each bind S-adenosyl-L-methionine; these read GCS, DN, and DI.

The protein belongs to the class I-like SAM-binding methyltransferase superfamily. Cx-SAM synthase family. As to quaternary structure, homodimer.

It carries out the reaction prephenate + S-adenosyl-L-methionine = carboxy-S-adenosyl-L-methionine + 3-phenylpyruvate + H2O. Catalyzes the conversion of S-adenosyl-L-methionine (SAM) to carboxy-S-adenosyl-L-methionine (Cx-SAM). The polypeptide is Carboxy-S-adenosyl-L-methionine synthase (Actinobacillus pleuropneumoniae serotype 5b (strain L20)).